Reading from the N-terminus, the 47-residue chain is Defensin-like protein 1 (47 aa).

4 disulfide bridges follow: cysteine 3-cysteine 47, cysteine 14-cysteine 36, cysteine 20-cysteine 41, and cysteine 24-cysteine 43.

The protein belongs to the DEFL family. Protease inhibitor I18 (RTI/MTI-2) subfamily.

The protein is Defensin-like protein 1 of Sorghum bicolor (Sorghum).